Consider the following 472-residue polypeptide: 3-isopropylmalate dehydratase large subunit (472 aa).

Residues cysteine 347, cysteine 407, and cysteine 410 each coordinate [4Fe-4S] cluster.

Belongs to the aconitase/IPM isomerase family. LeuC type 1 subfamily. In terms of assembly, heterodimer of LeuC and LeuD. The cofactor is [4Fe-4S] cluster.

The catalysed reaction is (2R,3S)-3-isopropylmalate = (2S)-2-isopropylmalate. It participates in amino-acid biosynthesis; L-leucine biosynthesis; L-leucine from 3-methyl-2-oxobutanoate: step 2/4. In terms of biological role, catalyzes the isomerization between 2-isopropylmalate and 3-isopropylmalate, via the formation of 2-isopropylmaleate. The chain is 3-isopropylmalate dehydratase large subunit from Bacillus licheniformis (strain ATCC 14580 / DSM 13 / JCM 2505 / CCUG 7422 / NBRC 12200 / NCIMB 9375 / NCTC 10341 / NRRL NRS-1264 / Gibson 46).